The following is a 502-amino-acid chain: Glutamate decarboxylase 1 (502 aa).

At Ser-8 the chain carries Phosphoserine. At Lys-277 the chain carries N6-(pyridoxal phosphate)lysine. Residues Leu-469–Cys-502 are calmodulin-binding.

This sequence belongs to the group II decarboxylase family. In terms of assembly, homohexamer. Interacts with calmodulin with a 1:3 stoichiometry. Pyridoxal 5'-phosphate serves as cofactor. As to expression, expressed in roots. Detected at low levels in shoots of young seedlings. Not detected in the root tips or in the central vascular bundle in the elongating region of mature roots.

The enzyme catalyses L-glutamate + H(+) = 4-aminobutanoate + CO2. With respect to regulation, up-regulated by calmodulin binding at physiological pH. In terms of biological role, catalyzes the conversion of glutamate to 4-aminobutanoate (GABA). The calmodulin-binding is calcium-dependent and it is proposed to directly or indirectly form a calcium regulated control of GABA biosynthesis. The chain is Glutamate decarboxylase 1 (GAD1) from Arabidopsis thaliana (Mouse-ear cress).